The following is a 167-amino-acid chain: MKIKAYIPAIAAVILSSNATLANQNQAYNSNHTTSLHQAIELLDNQITNIDNLFKNKLPFYESNSIKSKFITKDKQYIIIMEVPGFDKDHIKIKVNGNKLFVKGNIEDKNKADDSNNYMNKNFNYVISLYEDVDQKNISSSLKNGILTITLPRIEVKEQDAKEIPIN.

One can recognise a sHSP domain in the interval 59 to 167 (PFYESNSIKS…EQDAKEIPIN (109 aa)).

This sequence belongs to the small heat shock protein (HSP20) family.

The chain is Small heat shock protein C1 (hspC1) from Rickettsia bellii (strain RML369-C).